A 554-amino-acid polypeptide reads, in one-letter code: MASHPAHRSSKAADEELPKASSTFHPSLWGSFFLTYQPPTAPQRANMKERAEVLRERVRKVLKGSTTDQLPETVNLILTLQRLGLGYYYENEIDKLLHQIYSNSDYNVKDLNLVSQRFYLLRKNGYDVPSDVFLSFKTEEGGFACAAADTRSLLSLYNAAYLRKHGEEVLDEAISSTRLRLQDLLGRLLPESPFAKEVSSSLRTPLFRRVGILEARNYIPIYETEATRNEAVLELAKLNFNLQQLDFCEELKHCSAWWNEMIAKSKLTFVRDRIVEEYFWMNGACYDPPYSLSRIILTKITGLITIIDDMFDTHGTTEDCMKFAEAFGRWDESAIHLLPEYMKDFYILMLETFQSFEDALGPEKSYRVLYLKQAMERLVELYSKEIKWRDDDYVPTMSEHLQVSAETIATIALTCSAYAGMGDMSIRKETFEWALSFPQFIRTFGSFVRLSNDVVSTKREQTKDHSPSTVHCYMKEHGTTMDDACEKIKELIEDSWKDMLEQSLALKGLPKVVPQLVFDFSRTTDNMYRDRDALTSSEALKEMIQLLFVEPIPE.

Positions 308 and 312 each coordinate Mg(2+). Substrate contacts are provided by aspartate 308, aspartate 312, arginine 449, and asparagine 452. The short motif at 308-312 (DDMFD) is the DDXXD motif element. Asparagine 452, serine 456, and glutamate 460 together coordinate Mg(2+).

It belongs to the terpene synthase family. As to quaternary structure, monomer. It depends on Mg(2+) as a cofactor. Mn(2+) is required as a cofactor. Highly expressed in the husk. Detected in leaf sheaths and leaves.

It is found in the cytoplasm. It carries out the reaction (2E,6E)-farnesyl diphosphate = 7-epi-sesquithujene + diphosphate. It catalyses the reaction (2E,6E)-farnesyl diphosphate = (1S,5S,6R)-alpha-bergamotene + diphosphate. The catalysed reaction is (2E,6E)-farnesyl diphosphate = (E)-beta-farnesene + diphosphate. The enzyme catalyses (2E,6E)-farnesyl diphosphate = (S)-beta-bisabolene + diphosphate. It carries out the reaction (2Z,6E)-farnesyl diphosphate = (-)-beta-curcumene + diphosphate. It catalyses the reaction (2E,6E)-farnesyl diphosphate = gamma-curcumene + diphosphate. The catalysed reaction is (2E,6E)-farnesyl diphosphate = sesquisabinene A + diphosphate. It functions in the pathway secondary metabolite biosynthesis; terpenoid biosynthesis. In terms of biological role, sesquiterpene synthase involved in the production after herbivore attack of a blend of volatiles that attracts natural enemies of herbivores. Converts farnesyl diphosphate to (S)-beta-bisabolene and 7-epi-sesquithujene, along with a mixture of more than 20 other minor sesquiterpene olefins. Can also act in vitro as a monoterpene synthase, converting geranyl diphosphate to (S)-(-)-limonene, beta-myrcene and 11 other monoterpenes. In Zea mays (Maize), this protein is 7-epi-sesquithujene synthase.